The primary structure comprises 756 residues: Sodium/hydrogen exchanger 8 (756 aa).

Residues 1 to 31 are Extracellular-facing; it reads MTSIIGAALPYKSPEKAIASSSYSAENDSSP. N-linked (GlcNAc...) asparagine glycosylation is present at Asn-27. Residues 32–52 traverse the membrane as a helical segment; it reads VDAVIFAGTSLVLGTACRYLF. At 53–56 the chain is on the cytoplasmic side; it reads NGTR. A helical membrane pass occupies residues 57–77; it reads VPYTVVLLVIGIFLGSLEYGT. Residues 78 to 89 are Extracellular-facing; sequence KHNLGKLGHGIR. A helical membrane pass occupies residues 90–110; that stretch reads IWNGINPDLLLAVFLPVLLFE. Residues 111–125 are Cytoplasmic-facing; it reads SSFSMDVHQIKRCMG. A helical membrane pass occupies residues 126–146; the sequence is QMVLLAGPGVLISTFCLGALI. The Extracellular segment spans residues 147-157; sequence KLTFPYNWDWK. A helical membrane pass occupies residues 158–178; sequence TSLLLGGLLGATDPVAVVALL. Topologically, residues 179–194 are cytoplasmic; that stretch reads KELGASKKMTTLIDGE. Residues 195 to 215 form a helical membrane-spanning segment; it reads SLMNDGVSVVVFQLFFKMVMG. Topologically, residues 216–225 are extracellular; the sequence is HNSDWGSIIK. The helical transmembrane segment at 226–248 threads the bilayer; that stretch reads FLVQNSFGAVGIGLAFGIASVFW. The Cytoplasmic portion of the chain corresponds to 249–251; that stretch reads LKF. A helical transmembrane segment spans residues 252-271; it reads IFNDTVAQITVTLSASYFAY. Residues 272-276 are Extracellular-facing; that stretch reads YTAQE. A helical membrane pass occupies residues 277–297; the sequence is WAGVSGILTVMILGMFFAAFA. Residues 298–311 are Cytoplasmic-facing; it reads RTAFKGDSHQSLHH. A helical membrane pass occupies residues 312–332; the sequence is FWEMAAYIANTLVFMLSGVII. At 333 to 350 the chain is on the extracellular side; it reads AESVLSGQTISYKGNSWS. A helical transmembrane segment spans residues 351 to 371; it reads FLFLLYLYVQLSRCVVVGVLY. The Cytoplasmic segment spans residues 372–385; sequence PLLCRSGYGLDWKE. The helical transmembrane segment at 386 to 406 threads the bilayer; that stretch reads SIILTWSGLRGAVSLSLALSV. Over 407 to 422 the chain is Extracellular; sequence KQSSGNSYLSSDTGTR. The chain crosses the membrane as a helical span at residues 423 to 443; sequence FLFLTGGIVFLTLVVNGSTTQ. At 444 to 756 the chain is on the cytoplasmic side; that stretch reads LLLHLLRMDT…RSLAIGETDA (313 aa).

It belongs to the monovalent cation:proton antiporter 1 (CPA1) transporter (TC 2.A.36) family.

Its subcellular location is the cell membrane. It catalyses the reaction Na(+)(in) + H(+)(out) = Na(+)(out) + H(+)(in). The catalysed reaction is K(+)(in) + H(+)(out) = K(+)(out) + H(+)(in). In terms of biological role, may act in low affinity electroneutral exchange of protons for cations such as Na(+) or K(+) across membranes. May also exchange Li(+) and Cs(+) with a lower affinity. This is Sodium/hydrogen exchanger 8 (NHX8) from Arabidopsis thaliana (Mouse-ear cress).